Here is a 658-residue protein sequence, read N- to C-terminus: PTS system 2-O-alpha-mannosyl-D-glycerate-specific EIIABC component (658 aa).

Residues 1–313 lie on the Periplasmic side of the membrane; it reads MVLFYRAHWR…TELKQALLSG (313 aa). In terms of domain architecture, PTS EIIA type-2 spans 25 to 171; it reads TLTHRDALCL…DELLSALDDK (147 aa). His87 functions as the Tele-phosphohistidine intermediate; for EIIA activity in the catalytic mechanism. His87 carries the post-translational modification Phosphohistidine; by HPr. A PTS EIIB type-2 domain is found at 186-282; that stretch reads IVCVTACPAG…AEALIQQALT (97 aa). The Phosphocysteine intermediate; for EIIB activity role is filled by Cys192. Cys192 carries the post-translational modification Phosphocysteine; by EIIA. The 336-residue stretch at 306-641 folds into the PTS EIIC type-2 domain; sequence LKQALLSGIS…AISTAILLMW (336 aa). A helical membrane pass occupies residues 314 to 334; the sequence is ISFAVPLIVAGGTVLAVAVLL. Over 335–358 the chain is Cytoplasmic; it reads SQIFGLQDLFNEENSWLWMYRKLG. The helical transmembrane segment at 359 to 379 threads the bilayer; sequence GGLLGILMVPVLAAYTAYSLA. Residues 380 to 389 are Periplasmic-facing; the sequence is DKPALAPGFA. Residues 390–410 traverse the membrane as a helical segment; sequence AGLAANMIGSGFLGAVVGGLI. Residues 411 to 433 are Cytoplasmic-facing; the sequence is AGYLMRWVKNHLRLSSKFNGFLT. A helical membrane pass occupies residues 434–454; sequence FYLYPVLGTLGAGSLMLFVVG. Residues 455–474 lie on the Periplasmic side of the membrane; it reads EPVAWINNSLTAWLNGLSGS. Residues 475–495 traverse the membrane as a helical segment; sequence NALLLGAILGFMCSFDLGGPV. The Cytoplasmic segment spans residues 496–500; that stretch reads NKAAY. The helical transmembrane segment at 501-521 threads the bilayer; the sequence is AFCLGAMANGVYGPYAIFASV. Topologically, residues 522-551 are periplasmic; that stretch reads KMVSAFTVTASTMLAPRLFKEFEIETGKST. The chain crosses the membrane as a helical span at residues 552-572; that stretch reads WLLGLAGITEGAIPMAIEDPL. A topological domain (cytoplasmic) is located at residue Arg573. A helical transmembrane segment spans residues 574-594; sequence VIGSFVLGSMVTGAIVGAMNI. At 595-620 the chain is on the periplasmic side; that stretch reads GLSTPGAGIFSLFLLHDNGAGGVMAA. A helical membrane pass occupies residues 621–641; that stretch reads IGWFGAALVGAAISTAILLMW. Residues 642 to 658 are Cytoplasmic-facing; it reads RRHAVKHGNYLTDGVMP.

The protein localises to the cell inner membrane. The catalysed reaction is (2R)-2-O-(alpha-D-mannosyl)-glycerate(out) + N(pros)-phospho-L-histidyl-[protein] = (2R)-2-O-(6-phospho-alpha-D-mannosyl)-glycerate(in) + L-histidyl-[protein]. Functionally, the phosphoenolpyruvate-dependent sugar phosphotransferase system (sugar PTS), a major carbohydrate active transport system, catalyzes the phosphorylation of incoming sugar substrates concomitantly with their translocation across the cell membrane. This system is involved in mannosyl-D-glycerate transport. Also involved in thermoinduction of ompC. This Escherichia coli (strain K12) protein is PTS system 2-O-alpha-mannosyl-D-glycerate-specific EIIABC component.